The primary structure comprises 78 residues: Probable cytochrome c oxidase subunit 6B (78 aa).

A CHCH domain is found at 21–64 (TKHCWANYVDYYGCVKHYNGDNSKCQTFFNSMNSLCPAAWISEW). The Cx9C motif motif lies at 24–34 (CWANYVDYYGC). 2 disulfides stabilise this stretch: cysteine 24-cysteine 56 and cysteine 34-cysteine 45. A Cx10C motif motif is present at residues 45–56 (CQTFFNSMNSLC).

The protein belongs to the cytochrome c oxidase subunit 6B family. In terms of assembly, component of the cytochrome c oxidase (complex IV, CIV), a multisubunit enzyme composed of a catalytic core of 3 subunits and several supernumerary subunits. The complex exists as a monomer or a dimer and forms supercomplexes (SCs) in the inner mitochondrial membrane with ubiquinol-cytochrome c oxidoreductase (cytochrome b-c1 complex, complex III, CIII).

It localises to the mitochondrion inner membrane. It functions in the pathway energy metabolism; oxidative phosphorylation. Functionally, component of the cytochrome c oxidase, the last enzyme in the mitochondrial electron transport chain which drives oxidative phosphorylation. The respiratory chain contains 3 multisubunit complexes succinate dehydrogenase (complex II, CII), ubiquinol-cytochrome c oxidoreductase (cytochrome b-c1 complex, complex III, CIII) and cytochrome c oxidase (complex IV, CIV), that cooperate to transfer electrons derived from NADH and succinate to molecular oxygen, creating an electrochemical gradient over the inner membrane that drives transmembrane transport and the ATP synthase. Cytochrome c oxidase is the component of the respiratory chain that catalyzes the reduction of oxygen to water. Electrons originating from reduced cytochrome c in the intermembrane space (IMS) are transferred via the dinuclear copper A center (CU(A)) of subunit 2 and heme A of subunit 1 to the active site in subunit 1, a binuclear center (BNC) formed by heme A3 and copper B (CU(B)). The BNC reduces molecular oxygen to 2 water molecules using 4 electrons from cytochrome c in the IMS and 4 protons from the mitochondrial matrix. In Dictyostelium discoideum (Social amoeba), this protein is Probable cytochrome c oxidase subunit 6B.